Here is a 1036-residue protein sequence, read N- to C-terminus: uncharacterized protein (1036 aa).

An N-terminal signal peptide occupies residues 1 to 24 (MKRVGLIGVIMAALLVISATPVMA). A helical transmembrane segment spans residues 1011–1033 (GGGVPGFEAVFAIAGLLAVAYLL).

Its subcellular location is the membrane. This is an uncharacterized protein from Archaeoglobus fulgidus (strain ATCC 49558 / DSM 4304 / JCM 9628 / NBRC 100126 / VC-16).